Consider the following 117-residue polypeptide: Minor capsid protein VP2 (117 aa).

It belongs to the lagovirus VP2 protein family. As to quaternary structure, homooligomer. The portal-like structure consists in 12 copies of VP2. Interacts with capsid protein VP1.

The protein resides in the virion. It is found in the host cytoplasm. Minor structural protein that forms a portal-like structure at a unique three-fold axis of symmetry, following binding to the host receptor. The channel formed by VP2 may allow the delivery of the viral genome through the host endosomal membrane. The sequence is that of Minor capsid protein VP2 from Rabbit hemorrhagic disease virus (strain AST89) (Ra/LV/RHDV/AST89/1989/SP).